We begin with the raw amino-acid sequence, 380 residues long: Probable acyl-CoA dehydrogenase YngJ (380 aa).

FAD-binding positions include 123 to 132 (FGLTEPNAGS), 156 to 158 (WIT), R269, and 337 to 341 (QIHGG). The active-site Proton acceptor is the E364. 366–368 (TSE) serves as a coordination point for FAD.

Belongs to the acyl-CoA dehydrogenase family. FAD serves as cofactor.

It catalyses the reaction a 2,3-saturated acyl-CoA + A = a 2,3-dehydroacyl-CoA + AH2. This Bacillus subtilis (strain 168) protein is Probable acyl-CoA dehydrogenase YngJ (yngJ).